We begin with the raw amino-acid sequence, 262 residues long: Transcription factor bHLH81 (262 aa).

Residues 1 to 29 form a disordered region; the sequence is MQPTSVGSSGGGDDGGGRGGGGGLSRSGL. Residues 8–25 show a composition bias toward gly residues; the sequence is SSGGGDDGGGRGGGGGLS. In terms of domain architecture, bHLH spans 190–240; sequence CATHPRSIAERVRRTRISDRIRKLQELVPNMDKQTNTADMLEEAVEYVKVL.

As to quaternary structure, homodimer. In terms of tissue distribution, expressed in flowers.

The protein localises to the nucleus. This Arabidopsis thaliana (Mouse-ear cress) protein is Transcription factor bHLH81 (BHLH81).